The chain runs to 505 residues: 2,3-bisphosphoglycerate-independent phosphoglycerate mutase (505 aa).

Positions 11 and 61 each coordinate Mn(2+). Ser-61 functions as the Phosphoserine intermediate in the catalytic mechanism. Substrate is bound by residues His-122, Arg-152–Asp-153, Arg-184, Arg-190, Arg-258–Arg-261, and Lys-331. 5 residues coordinate Mn(2+): Asp-396, His-400, Asp-437, His-438, and His-455.

The protein belongs to the BPG-independent phosphoglycerate mutase family. As to quaternary structure, monomer. Requires Mn(2+) as cofactor.

It catalyses the reaction (2R)-2-phosphoglycerate = (2R)-3-phosphoglycerate. It participates in carbohydrate degradation; glycolysis; pyruvate from D-glyceraldehyde 3-phosphate: step 3/5. Its function is as follows. Catalyzes the interconversion of 2-phosphoglycerate and 3-phosphoglycerate. The polypeptide is 2,3-bisphosphoglycerate-independent phosphoglycerate mutase (Mesomycoplasma hyopneumoniae (strain J / ATCC 25934 / NCTC 10110) (Mycoplasma hyopneumoniae)).